We begin with the raw amino-acid sequence, 295 residues long: Ethanolamine ammonia-lyase small subunit (295 aa).

The adenosylcob(III)alamin site is built by Val207, Glu228, and Cys258.

Belongs to the EutC family. In terms of assembly, the basic unit is a heterodimer which dimerizes to form tetramers. The heterotetramers trimerize; 6 large subunits form a core ring with 6 small subunits projecting outwards. It depends on adenosylcob(III)alamin as a cofactor.

It localises to the bacterial microcompartment. The catalysed reaction is ethanolamine = acetaldehyde + NH4(+). It functions in the pathway amine and polyamine degradation; ethanolamine degradation. Its function is as follows. Catalyzes the deamination of various vicinal amino-alcohols to oxo compounds. Allows this organism to utilize ethanolamine as the sole source of nitrogen and carbon in the presence of external vitamin B12. In Escherichia coli O139:H28 (strain E24377A / ETEC), this protein is Ethanolamine ammonia-lyase small subunit.